The sequence spans 585 residues: MDPYYPFDALDVWEHRRFIVADSRSFITPEFPRDFWMLPVFNIPRETAAERAAVLQAQRTAAAAALENAALQAAELPVDIERRIRPIEQQVHHIADALEALETAAAAAEEADAARDAEARGEGAADGAAPSPTAGPAAAEMEVQIVRNDPPLRYDTNLPVDLLHMVYAGRGAAGSSGVVFGTWYRTIQERTIADFPLTTRSADFRDGRMSKTFMTALVLSLQSCGRLYVGQRHYSAFECAVLCLYLLYRTTHESSPDRDRAPVAFGDLLARLPRYLARLAAVIGDESGRPQYRYRDDKLPKAQFAAAGGRYEHGALATHVVIATLVRHGVLPAAPGDVPRDTSTRVNPDDVAHRDDVNRAAAAFLARGHNLFLWEDQTLLRATANTITALAVLRRLLANGNVYADRLDNRLQLGMLIPGAVPAEAIARGASGLDSGAIKSGDNNLEALCVNYVLPLYQADPTVELTQLFPGLAALCLDAQAGRPLASTRRVVDMSSGARQAALVRLTALELINRTRTNTTPVGEIINAHDALGIQYEQGPGLLAQQARIGLASNTKRFATFNVGSDYDLLYFLCLGFIPQYLSVA.

Positions Met1 to Ala49 are interaction with major capsid protein/MCP. The tract at residues Glu109–Ala138 is disordered. Residues Asp112–Gly123 are compositionally biased toward basic and acidic residues. A compositionally biased stretch (low complexity) spans Ala125–Ala138.

Belongs to the herpesviridae CVC2 protein family. In terms of assembly, heterodimerizes with CVC1. Interacts with major capsid protein/MCP and triplex capsid protein 1/TRX1 at the pentamer vertices. Interacts with the large tegument protein/LTP.

The protein resides in the virion. It localises to the host nucleus. In terms of biological role, capsid vertex-specific component that plays a role during viral DNA encapsidation, assuring correct genome cleavage and presumably stabilizing capsids that contain full-length viral genomes. Participates in the interaction between the capsid and the tegument through interaction with the large tegument protein/LTP. The protein is Capsid vertex component 2 of Homo sapiens (Human).